The following is a 305-amino-acid chain: MAQVKRIRRNISGIILLDKPLGFTSNAALQKVRWLLNAEKAGHTGSLDPLATGVLPLCFGEATKFSQYLLDSDKGYETVMQMGQTTNTGDAEGEVLQTRDVTVGRADIEALLPRFRGPISQIPPMYSALKRDGQPLYKLARAGEVVEREARSVTINRLELLECEGTRARLSVGCSKGTYIRTLVEDIGEALGCGAYVAELRRTQAGPFALAQTVTLEELEQAHAEGGNEALDRFLMPSDSGLQDWPLVSLSEHSAFYWLHGQAVRAPDAPQFGMVRVQDHNARFIGIGEVSEDGRIAPRRLIRSE.

D48 acts as the Nucleophile in catalysis.

It belongs to the pseudouridine synthase TruB family. Type 1 subfamily.

The enzyme catalyses uridine(55) in tRNA = pseudouridine(55) in tRNA. Functionally, responsible for synthesis of pseudouridine from uracil-55 in the psi GC loop of transfer RNAs. The polypeptide is tRNA pseudouridine synthase B (Pseudomonas putida (strain ATCC 700007 / DSM 6899 / JCM 31910 / BCRC 17059 / LMG 24140 / F1)).